Consider the following 101-residue polypeptide: Trp operon repressor homolog (101 aa).

Residues glutamine 59–methionine 82 mediate DNA binding.

It belongs to the TrpR family. Homodimer.

Its subcellular location is the cytoplasm. In terms of biological role, this protein is an aporepressor. When complexed with L-tryptophan it binds the operator region of the trp operon and prevents the initiation of transcription. The chain is Trp operon repressor homolog from Actinobacillus succinogenes (strain ATCC 55618 / DSM 22257 / CCUG 43843 / 130Z).